The chain runs to 585 residues: Arginine--tRNA ligase (585 aa).

The 'HIGH' region motif lies at 131 to 141 (ANPTGPMHVGH).

It belongs to the class-I aminoacyl-tRNA synthetase family. In terms of assembly, monomer.

The protein localises to the cytoplasm. The enzyme catalyses tRNA(Arg) + L-arginine + ATP = L-arginyl-tRNA(Arg) + AMP + diphosphate. The sequence is that of Arginine--tRNA ligase from Brucella suis (strain ATCC 23445 / NCTC 10510).